The sequence spans 226 residues: UPF0177 protein YbdJ (226 aa).

Helical transmembrane passes span 16–36, 43–63, 81–101, 169–189, and 206–226; these read LLLL…LGIF, FAFN…IVIA, LLFI…AHHL, FAWV…ISLV, and LHSS…FWVF.

The protein belongs to the UPF0177 family.

The protein resides in the cell membrane. This is UPF0177 protein YbdJ (ybdJ) from Lactococcus lactis subsp. lactis (strain IL1403) (Streptococcus lactis).